The following is a 415-amino-acid chain: MKTKMFGLHEPICIKLLEQAIELKDYIVVRMILNQQENINTYKHFNMLRKAVLNHDHNLVNIFIDKNFNINIADSVGYTLLRYAVEVDDVNIAKILLDAGSIINKNDYRLLHSAITHENKKMIELLCLHGININVKDDKGYTALYYTICNNNYDMVCFLLEKNADISIVNKYSMLHFLSTSNKYHNVMAVLLDKGIDVNIINHVKAPIHVAVERNNIYGTMLLINRNADVNIKELHGGRTSLHLAIKERNYEAAFVLINNGANVDSFDDVGNTPIFIAASLQDVRFMKLLLDNGADINVRNVFGETPVNMVITGGSKEVTQYTVSYLISLKVDNIVLNDFCAYKQNMNLIHRINYGSPRLFMEYIGDIYEWHLPYSVLTDDKPINYSKIQSKVSHNESRFLPYKKRYNYNNTLIQ.

ANK repeat units follow at residues 12–41 (ICIK…NINT), 43–72 (KHFN…NINI), 76–105 (VGYT…IINK), 107–135 (DYRL…NINV), 139–168 (KGYT…DISI), 170–200 (NKYS…DVNI), 203–232 (HVKA…DVNI), 237–266 (GGRT…NVDS), 270–299 (VGNT…DINV), and 303–332 (FGET…SLKV).

In Fowlpox virus (strain NVSL) (FPV), this protein is Putative ankyrin repeat protein FPV034 (ANK2).